Here is an 87-residue protein sequence, read N- to C-terminus: Phosphoribosyl-ATP pyrophosphatase (87 aa).

The protein belongs to the PRA-PH family.

It is found in the cytoplasm. The enzyme catalyses 1-(5-phospho-beta-D-ribosyl)-ATP + H2O = 1-(5-phospho-beta-D-ribosyl)-5'-AMP + diphosphate + H(+). Its pathway is amino-acid biosynthesis; L-histidine biosynthesis; L-histidine from 5-phospho-alpha-D-ribose 1-diphosphate: step 2/9. This is Phosphoribosyl-ATP pyrophosphatase from Arthrobacter sp. (strain FB24).